Consider the following 311-residue polypeptide: Ferrochelatase (311 aa).

Residues H179 and E260 each contribute to the Fe cation site.

This sequence belongs to the ferrochelatase family.

The protein resides in the cytoplasm. The enzyme catalyses heme b + 2 H(+) = protoporphyrin IX + Fe(2+). The protein operates within porphyrin-containing compound metabolism; protoheme biosynthesis; protoheme from protoporphyrin-IX: step 1/1. Catalyzes the ferrous insertion into protoporphyrin IX. This is Ferrochelatase from Helicobacter hepaticus (strain ATCC 51449 / 3B1).